Consider the following 407-residue polypeptide: Arginine biosynthesis bifunctional protein ArgJ (407 aa).

Substrate is bound by residues Thr154, Lys180, Thr191, Glu278, Asn402, and Ser407. Catalysis depends on Thr191, which acts as the Nucleophile.

It belongs to the ArgJ family. Heterotetramer of two alpha and two beta chains.

The protein resides in the cytoplasm. It catalyses the reaction N(2)-acetyl-L-ornithine + L-glutamate = N-acetyl-L-glutamate + L-ornithine. It carries out the reaction L-glutamate + acetyl-CoA = N-acetyl-L-glutamate + CoA + H(+). Its pathway is amino-acid biosynthesis; L-arginine biosynthesis; L-ornithine and N-acetyl-L-glutamate from L-glutamate and N(2)-acetyl-L-ornithine (cyclic): step 1/1. It functions in the pathway amino-acid biosynthesis; L-arginine biosynthesis; N(2)-acetyl-L-ornithine from L-glutamate: step 1/4. In terms of biological role, catalyzes two activities which are involved in the cyclic version of arginine biosynthesis: the synthesis of N-acetylglutamate from glutamate and acetyl-CoA as the acetyl donor, and of ornithine by transacetylation between N(2)-acetylornithine and glutamate. The sequence is that of Arginine biosynthesis bifunctional protein ArgJ from Psychrobacter arcticus (strain DSM 17307 / VKM B-2377 / 273-4).